The following is a 582-amino-acid chain: Proline--tRNA ligase (582 aa).

This sequence belongs to the class-II aminoacyl-tRNA synthetase family. ProS type 1 subfamily. In terms of assembly, homodimer.

The protein localises to the cytoplasm. The enzyme catalyses tRNA(Pro) + L-proline + ATP = L-prolyl-tRNA(Pro) + AMP + diphosphate. Its function is as follows. Catalyzes the attachment of proline to tRNA(Pro) in a two-step reaction: proline is first activated by ATP to form Pro-AMP and then transferred to the acceptor end of tRNA(Pro). As ProRS can inadvertently accommodate and process non-cognate amino acids such as alanine and cysteine, to avoid such errors it has two additional distinct editing activities against alanine. One activity is designated as 'pretransfer' editing and involves the tRNA(Pro)-independent hydrolysis of activated Ala-AMP. The other activity is designated 'posttransfer' editing and involves deacylation of mischarged Ala-tRNA(Pro). The misacylated Cys-tRNA(Pro) is not edited by ProRS. In Mycobacterium ulcerans (strain Agy99), this protein is Proline--tRNA ligase.